Consider the following 165-residue polypeptide: Large ribosomal subunit protein bL17 (165 aa).

The segment covering Gln-138–Asp-158 has biased composition (basic and acidic residues). Residues Gln-138–Lys-165 form a disordered region.

It belongs to the bacterial ribosomal protein bL17 family. As to quaternary structure, part of the 50S ribosomal subunit. Contacts protein L32.

The sequence is that of Large ribosomal subunit protein bL17 from Leptospira borgpetersenii serovar Hardjo-bovis (strain JB197).